Consider the following 99-residue polypeptide: Aspartyl/glutamyl-tRNA(Asn/Gln) amidotransferase subunit C (99 aa).

Belongs to the GatC family. In terms of assembly, heterotrimer of A, B and C subunits.

It carries out the reaction L-glutamyl-tRNA(Gln) + L-glutamine + ATP + H2O = L-glutaminyl-tRNA(Gln) + L-glutamate + ADP + phosphate + H(+). The catalysed reaction is L-aspartyl-tRNA(Asn) + L-glutamine + ATP + H2O = L-asparaginyl-tRNA(Asn) + L-glutamate + ADP + phosphate + 2 H(+). Functionally, allows the formation of correctly charged Asn-tRNA(Asn) or Gln-tRNA(Gln) through the transamidation of misacylated Asp-tRNA(Asn) or Glu-tRNA(Gln) in organisms which lack either or both of asparaginyl-tRNA or glutaminyl-tRNA synthetases. The reaction takes place in the presence of glutamine and ATP through an activated phospho-Asp-tRNA(Asn) or phospho-Glu-tRNA(Gln). The chain is Aspartyl/glutamyl-tRNA(Asn/Gln) amidotransferase subunit C from Rhodococcus erythropolis (strain PR4 / NBRC 100887).